Reading from the N-terminus, the 118-residue chain is Large ribosomal subunit protein uL18 (118 aa).

Belongs to the universal ribosomal protein uL18 family. In terms of assembly, part of the 50S ribosomal subunit; part of the 5S rRNA/L5/L18/L25 subcomplex. Contacts the 5S and 23S rRNAs.

Functionally, this is one of the proteins that bind and probably mediate the attachment of the 5S RNA into the large ribosomal subunit, where it forms part of the central protuberance. The protein is Large ribosomal subunit protein uL18 of Parvibaculum lavamentivorans (strain DS-1 / DSM 13023 / NCIMB 13966).